A 415-amino-acid polypeptide reads, in one-letter code: Enolase (415 aa).

Q161 is a binding site for (2R)-2-phosphoglycerate. The Proton donor role is filled by E203. 3 residues coordinate Mg(2+): D240, E281, and D308. (2R)-2-phosphoglycerate contacts are provided by K333, R362, S363, and K384. K333 acts as the Proton acceptor in catalysis.

It belongs to the enolase family. It depends on Mg(2+) as a cofactor.

It localises to the cytoplasm. The protein localises to the secreted. The protein resides in the cell surface. It catalyses the reaction (2R)-2-phosphoglycerate = phosphoenolpyruvate + H2O. It participates in carbohydrate degradation; glycolysis; pyruvate from D-glyceraldehyde 3-phosphate: step 4/5. Functionally, catalyzes the reversible conversion of 2-phosphoglycerate (2-PG) into phosphoenolpyruvate (PEP). It is essential for the degradation of carbohydrates via glycolysis. In Campylobacter hominis (strain ATCC BAA-381 / DSM 21671 / CCUG 45161 / LMG 19568 / NCTC 13146 / CH001A), this protein is Enolase.